A 660-amino-acid chain; its full sequence is MAAAVATGVAPATMVDQVPSPTAQTSVQVPVSIPLPSPVVVADQTHPNSSLYAGDLDPKVTEAHLFDLFKHVANVVSVRVCRDQNRRSLGYAYINFSNPNDAYRAMEALNYTPLFDRPIRIMLSNRDPSTRLSGKGNIFIKNLDASIDNKALFETFSSFGTILSCKVAMDVTGRSKGYGFVQFEKEESAQAAIDKLNGMLMNDKQVFVGHFIRRQERARDENTPTPRFTNVYVKNLPKEIGEDELRKTFGKFGVISSAVVMRDQSGNSRCFGFVNFECTEAAASAVEKMNGISLGDDVLYVGRAQKKSEREEELRRKFEQERINRFEKSQGANLYLKNLDDSVDDEKLKEMFSEYGNVTSSKVMLNPQGMSRGFGFVAYSNPEEALRALSEMNGKMIGRKPLYIALAQRKEDRRAHLQALFSQIRAPGPMSGFHHPPGGPMPGPPQHMYVGQNGASMVPSQPIGYGFQPQFMPGMRPGSGPGNFIVPYPLQRQPQTGPRMGFRRGATNVQQHIQQQQLMHRNPSPGMRYMNGASNGRNGMDSSVPQGILPPIIPLPIDASSISHQKAPLLPISKLTSSLASASPADRTRMLGEQLYPLVERHEPLHVAKVTGMLLEMDQAEILHLMESPEALKSKVSEALDVLRLSVDPTDHDLGFSTTD.

RRM domains are found at residues 49 to 126 (SSLY…LSNR), 136 to 213 (GNIF…HFIR), 229 to 306 (TNVY…RAQK), and 332 to 409 (ANLY…LAQR). The PABC domain maps to 571–648 (PISKLTSSLA…ALDVLRLSVD (78 aa)).

This sequence belongs to the polyadenylate-binding protein type-1 family. As to expression, expressed predominantly in immature flowers. Detected in tapetum and pollen. Strongly expressed in immatures siliques.

The protein localises to the cytoplasm. Its subcellular location is the nucleus. Its function is as follows. Binds the poly(A) tail of mRNA. Appears to be an important mediator of the multiple roles of the poly(A) tail in mRNA biogenesis, stability and translation. In the cytoplasm, affects both translation and mRNA decay. Inhibits the polyadenylated RNA degradation by the Rrp41p 3'--&gt;5' exonuclease in vitro. Binds with the 5'UTRs of PAB2, PAB3 and with a lower affinity with the 5'UTR of PAB5. This chain is Polyadenylate-binding protein 3 (PAB3), found in Arabidopsis thaliana (Mouse-ear cress).